A 284-amino-acid chain; its full sequence is Short-chain dehydrogenase RED1 (284 aa).

NADP(+) contacts are provided by Ile11, Thr37, Asp58, Asn86, Tyr151, Lys155, Val184, and Thr186. The active-site Proton acceptor is Tyr151. Lys155 functions as the Lowers pKa of active site Tyr in the catalytic mechanism.

The protein belongs to the short-chain dehydrogenases/reductases (SDR) family.

It functions in the pathway polyketide biosynthesis. Its function is as follows. Short-chain dehydrogenase; part of the gene cluster that mediates the biosynthesis of pyriculol and pyriculariol, two heptaketides that induce lesion formation upon application on rice leaves but are dispensable for pathogenicity. The highly reducing polyketide synthase synthesizes the heptaketide backbone of pyriculol and pyriculariol. Pyriculol and pyriculariol contain several hydroxyl moieties and double bonds, so it can be assumed that several reduction steps occur during biosynthesis. These reactions could be executed by PKS19 itself or partly by the tailoring enzymes OXR1, OXR2, RED1, RED2 or RED3, identified within the cluster. The FAD-linked oxidoreductase OXR1 is the only tailoring enzyme for which the function has been determined yet, and is involved in the oxidation of dihydropyriculol and dihydropyriculariol into pyriculol and pyriculariol, respectively. The chain is Short-chain dehydrogenase RED1 from Pyricularia oryzae (strain 70-15 / ATCC MYA-4617 / FGSC 8958) (Rice blast fungus).